A 148-amino-acid polypeptide reads, in one-letter code: Cathelicidin-1 (148 aa).

Residues 1 to 17 (MLSCWVLLLALLGGACA) form the signal peptide. A propeptide spanning residues 18-122 (LPAPLGYSQA…TCVDSMADPV (105 aa)) is cleaved from the precursor. Cystine bridges form between C75–C86 and C97–C114.

This sequence belongs to the cathelicidin family. As to expression, detected in gizzard, liver, small intestine, large intestine, cloaca, bursa of Fabricius, gall bladder, lung, trachea, kidney, testis and bone marrow.

It is found in the secreted. Its function is as follows. Binds bacterial lipopolysaccharide (LPS). Has potent antimicrobial activity against Gram-positive and Gram-negative bacteria (in vitro). Has hemolytic activity (in vitro). May play a role in the innate immune response. The polypeptide is Cathelicidin-1 (CATHL1) (Gallus gallus (Chicken)).